The primary structure comprises 251 residues: Small ribosomal subunit protein uS2 (251 aa).

An N-acetylserine modification is found at Ser2. The segment at Glu209 to Trp251 is disordered. Over residues Ala218–Glu237 the composition is skewed to acidic residues. Positions Ala238 to Trp251 are enriched in low complexity.

It belongs to the universal ribosomal protein uS2 family. Component of the small ribosomal subunit. Mature ribosomes consist of a small (40S) and a large (60S) subunit. The 40S subunit contains about 33 different proteins and 1 molecule of RNA (18S). The 60S subunit contains about 49 different proteins and 3 molecules of RNA (25S, 5.8S and 5S). Interacts with RPS21.

It localises to the cytoplasm. In terms of biological role, required for the assembly and/or stability of the 40S ribosomal subunit. Required for the processing of the 20S rRNA-precursor to mature 18S rRNA in a late step of the maturation of 40S ribosomal subunits. The sequence is that of Small ribosomal subunit protein uS2 from Candida glabrata (strain ATCC 2001 / BCRC 20586 / JCM 3761 / NBRC 0622 / NRRL Y-65 / CBS 138) (Yeast).